A 343-amino-acid chain; its full sequence is Geranylgeranyl pyrophosphate synthase 1 (343 aa).

3 residues coordinate isopentenyl diphosphate: K43, R46, and H75. Residues D82 and D86 each coordinate Mg(2+). R91 is a dimethylallyl diphosphate binding site. Position 92 (R92) interacts with isopentenyl diphosphate. Dimethylallyl diphosphate contacts are provided by K169, T170, and Q212. D215 contacts Mg(2+). 3 residues coordinate dimethylallyl diphosphate: N219, K229, and K239.

This sequence belongs to the FPP/GGPP synthase family. It depends on Mg(2+) as a cofactor.

It carries out the reaction isopentenyl diphosphate + dimethylallyl diphosphate = (2E)-geranyl diphosphate + diphosphate. The catalysed reaction is isopentenyl diphosphate + (2E)-geranyl diphosphate = (2E,6E)-farnesyl diphosphate + diphosphate. It catalyses the reaction isopentenyl diphosphate + (2E,6E)-farnesyl diphosphate = (2E,6E,10E)-geranylgeranyl diphosphate + diphosphate. Functionally, geranylgeranyl pyrophosphate synthase; part of the gene cluster 4 that mediates the biosynthesis of an isoprenoid secondary metabolite. The sequence is that of Geranylgeranyl pyrophosphate synthase 1 (GGS1) from Zymoseptoria tritici (strain CBS 115943 / IPO323) (Speckled leaf blotch fungus).